The following is a 132-amino-acid chain: Small ribosomal subunit protein uS8 (132 aa).

Belongs to the universal ribosomal protein uS8 family. As to quaternary structure, part of the 30S ribosomal subunit. Contacts proteins S5 and S12.

In terms of biological role, one of the primary rRNA binding proteins, it binds directly to 16S rRNA central domain where it helps coordinate assembly of the platform of the 30S subunit. This is Small ribosomal subunit protein uS8 from Renibacterium salmoninarum (strain ATCC 33209 / DSM 20767 / JCM 11484 / NBRC 15589 / NCIMB 2235).